The following is a 372-amino-acid chain: tRNA N6-adenosine threonylcarbamoyltransferase (372 aa).

H133, H137, and Y154 together coordinate a divalent metal cation. Residues 154–158 (YVSGG), D186, G201, E205, and N301 each bind substrate. D330 contacts a divalent metal cation.

This sequence belongs to the KAE1 / TsaD family. As to quaternary structure, component of the EKC/KEOPS complex composed of at least BUD32, CGI121, GON7, KAE1 and PCC1; the whole complex dimerizes. A divalent metal cation serves as cofactor.

It localises to the cytoplasm. The protein localises to the nucleus. The enzyme catalyses L-threonylcarbamoyladenylate + adenosine(37) in tRNA = N(6)-L-threonylcarbamoyladenosine(37) in tRNA + AMP + H(+). In terms of biological role, component of the EKC/KEOPS complex that is required for the formation of a threonylcarbamoyl group on adenosine at position 37 (t(6)A37) in tRNAs that read codons beginning with adenine. The complex is probably involved in the transfer of the threonylcarbamoyl moiety of threonylcarbamoyl-AMP (TC-AMP) to the N6 group of A37. KAE1 likely plays a direct catalytic role in this reaction, but requires other protein(s) of the complex to fulfill this activity. The EKC/KEOPS complex also promotes both telomere uncapping and telomere elongation. The complex is required for efficient recruitment of transcriptional coactivators. The protein is tRNA N6-adenosine threonylcarbamoyltransferase of Candida albicans (strain SC5314 / ATCC MYA-2876) (Yeast).